The following is a 248-amino-acid chain: Small ribosomal subunit protein uS3 (248 aa).

The KH type-2 domain maps to 38 to 106 (VREYLVKTLD…QVALNILEVK (69 aa)). A compositionally biased stretch (basic and acidic residues) spans 213–230 (ESEINAPAERRGRGDRNG). A disordered region spans residues 213–248 (ESEINAPAERRGRGDRNGRPRRGGQRRQRSEQKQEG).

It belongs to the universal ribosomal protein uS3 family. Part of the 30S ribosomal subunit. Forms a tight complex with proteins S10 and S14.

Its function is as follows. Binds the lower part of the 30S subunit head. Binds mRNA in the 70S ribosome, positioning it for translation. This is Small ribosomal subunit protein uS3 from Corynebacterium diphtheriae (strain ATCC 700971 / NCTC 13129 / Biotype gravis).